Here is a 419-residue protein sequence, read N- to C-terminus: Serine--tRNA ligase (419 aa).

Residue 226–228 participates in L-serine binding; it reads TSE. ATP is bound by residues 257–259 and valine 273; that span reads RRE. Position 280 (glutamate 280) interacts with L-serine. Residue 344 to 347 participates in ATP binding; sequence ELTS. Threonine 379 contacts L-serine.

It belongs to the class-II aminoacyl-tRNA synthetase family. Type-1 seryl-tRNA synthetase subfamily. As to quaternary structure, homodimer. The tRNA molecule binds across the dimer.

The protein localises to the cytoplasm. It catalyses the reaction tRNA(Ser) + L-serine + ATP = L-seryl-tRNA(Ser) + AMP + diphosphate + H(+). The enzyme catalyses tRNA(Sec) + L-serine + ATP = L-seryl-tRNA(Sec) + AMP + diphosphate + H(+). It functions in the pathway aminoacyl-tRNA biosynthesis; selenocysteinyl-tRNA(Sec) biosynthesis; L-seryl-tRNA(Sec) from L-serine and tRNA(Sec): step 1/1. In terms of biological role, catalyzes the attachment of serine to tRNA(Ser). Is also able to aminoacylate tRNA(Sec) with serine, to form the misacylated tRNA L-seryl-tRNA(Sec), which will be further converted into selenocysteinyl-tRNA(Sec). The sequence is that of Serine--tRNA ligase from Mycobacterium tuberculosis (strain CDC 1551 / Oshkosh).